The chain runs to 503 residues: Maturase K (503 aa).

Belongs to the intron maturase 2 family. MatK subfamily.

The protein resides in the plastid. It localises to the chloroplast. Its function is as follows. Usually encoded in the trnK tRNA gene intron. Probably assists in splicing its own and other chloroplast group II introns. This chain is Maturase K, found in Kunzea pulchella (Red kunzea).